The primary structure comprises 541 residues: Beta-hexosaminidase subunit A2 (541 aa).

The signal sequence occupies residues 1-21 (MINKFLTIFLIFSIVIIKVLS). Glu-314 acts as the Proton donor in catalysis. Asn-322, Asn-336, Asn-356, Asn-435, and Asn-483 each carry an N-linked (GlcNAc...) asparagine glycan.

It belongs to the glycosyl hydrolase 20 family.

The protein localises to the lysosome. It carries out the reaction Hydrolysis of terminal non-reducing N-acetyl-D-hexosamine residues in N-acetyl-beta-D-hexosaminides.. In terms of biological role, responsible for the degradation of GM2 gangliosides, and a variety of other molecules containing terminal N-acetyl hexosamines. The protein is Beta-hexosaminidase subunit A2 (hexa2) of Dictyostelium discoideum (Social amoeba).